Consider the following 623-residue polypeptide: Interleukin-27 receptor subunit alpha (623 aa).

Residues 1-24 (MNRLRVARLTPLELLLSLMSLLLG) form the signal peptide. Topologically, residues 25–510 (TRPHGSPGPL…HLPDNRIRWK (486 aa)) are extracellular. 2 consecutive Fibronectin type-III domains span residues 30 to 124 (SPGP…MKPD) and 125 to 225 (TPQI…TPFL). N46 carries N-linked (GlcNAc...) asparagine glycosylation. The WSXWS motif signature appears at 211–215 (WGEWS). N296, N305, N360, N368, and N461 each carry an N-linked (GlcNAc...) asparagine glycan. 2 consecutive Fibronectin type-III domains span residues 316 to 412 (APCD…VPLA) and 413 to 505 (GPAV…LPDN). The chain crosses the membrane as a helical span at residues 511–531 (ALPWFLSLWGLLLMGCGLSLA). Topologically, residues 532-623 (STRCLQARCL…PTPEELGLLV (92 aa)) are cytoplasmic. Residues 552–560 (IWERVPDPA) carry the Box 1 motif motif.

Belongs to the type I cytokine receptor family. Type 2 subfamily. Expressed in CD4+ and CD8+ T-cells, B-cells, natural killer cells and macrophages. Highest levels in CD4+ T-cells and natural killer cells. Expression highest in Th0 cells.

It is found in the membrane. Functionally, receptor for IL27. Requires IL6ST/GP130 to mediate signal transduction in response to IL27. This signaling system acts through STAT3 and STAT1. Involved in the regulation of Th1-type immune responses. Also appears to be involved in innate defense mechanisms. The protein is Interleukin-27 receptor subunit alpha (Il27ra) of Mus musculus (Mouse).